A 198-amino-acid polypeptide reads, in one-letter code: Segregation and condensation protein B (198 aa).

The tract at residues 168 to 198 (KLADPATDEPDQNEMDLFFDRFNQSKEQEEE) is disordered.

Belongs to the ScpB family. As to quaternary structure, homodimer. Homodimerization may be required to stabilize the binding of ScpA to the Smc head domains. Component of a cohesin-like complex composed of ScpA, ScpB and the Smc homodimer, in which ScpA and ScpB bind to the head domain of Smc. The presence of the three proteins is required for the association of the complex with DNA.

The protein resides in the cytoplasm. In terms of biological role, participates in chromosomal partition during cell division. May act via the formation of a condensin-like complex containing Smc and ScpA that pull DNA away from mid-cell into both cell halves. In Listeria monocytogenes serovar 1/2a (strain ATCC BAA-679 / EGD-e), this protein is Segregation and condensation protein B.